A 377-amino-acid chain; its full sequence is tRNA(Met) cytidine acetate ligase (377 aa).

Residues 7-20 (VVEY…HRYH), G101, N151, and R176 each bind ATP.

The protein belongs to the TmcAL family.

The protein resides in the cytoplasm. The catalysed reaction is cytidine(34) in elongator tRNA(Met) + acetate + ATP = N(4)-acetylcytidine(34) in elongator tRNA(Met) + AMP + diphosphate. Functionally, catalyzes the formation of N(4)-acetylcytidine (ac(4)C) at the wobble position of elongator tRNA(Met), using acetate and ATP as substrates. First activates an acetate ion to form acetyladenylate (Ac-AMP) and then transfers the acetyl group to tRNA to form ac(4)C34. The sequence is that of tRNA(Met) cytidine acetate ligase from Limosilactobacillus reuteri (strain DSM 20016) (Lactobacillus reuteri).